A 280-amino-acid chain; its full sequence is 4-diphosphocytidyl-2-C-methyl-D-erythritol kinase (280 aa).

Lysine 11 is an active-site residue. 95–105 contributes to the ATP binding site; it reads PVGAGLGGGSS. Residue aspartate 137 is part of the active site.

Belongs to the GHMP kinase family. IspE subfamily.

It catalyses the reaction 4-CDP-2-C-methyl-D-erythritol + ATP = 4-CDP-2-C-methyl-D-erythritol 2-phosphate + ADP + H(+). Its pathway is isoprenoid biosynthesis; isopentenyl diphosphate biosynthesis via DXP pathway; isopentenyl diphosphate from 1-deoxy-D-xylulose 5-phosphate: step 3/6. In terms of biological role, catalyzes the phosphorylation of the position 2 hydroxy group of 4-diphosphocytidyl-2C-methyl-D-erythritol. The sequence is that of 4-diphosphocytidyl-2-C-methyl-D-erythritol kinase from Citrifermentans bemidjiense (strain ATCC BAA-1014 / DSM 16622 / JCM 12645 / Bem) (Geobacter bemidjiensis).